A 512-amino-acid chain; its full sequence is Gamma-aminobutyric acid receptor subunit beta-2 (512 aa).

The first 25 residues, 1–25, serve as a signal peptide directing secretion; the sequence is MWRVRKRGYFGIWSFPLIIAAVCAQ. Residues 26-244 are Extracellular-facing; sequence SVNDPSNMSL…SFKLKRNIGY (219 aa). Residues N32 and N104 are each glycosylated (N-linked (GlcNAc...) asparagine). Histamine is bound at residue Y121. C160 and C174 are oxidised to a cystine. The N-linked (GlcNAc...) asparagine glycan is linked to N173. Histamine is bound by residues 180–181 and T226; that span reads SY. Residues Y181 and T226 each coordinate 4-aminobutanoate. 3 consecutive transmembrane segments (helical) span residues 245 to 266, 270 to 292, and 304 to 326; these read FILQ…SFWI, ASAA…NTHL, and AIDM…YALV. The Cytoplasmic segment spans residues 327–489; it reads NYIFFGRGPQ…DLTDVNAIDR (163 aa). Y441 bears the Phosphotyrosine mark. Residues 490–511 traverse the membrane as a helical segment; sequence WSRIFFPVVFSFFNIVYWLYYV.

Belongs to the ligand-gated ion channel (TC 1.A.9) family. Gamma-aminobutyric acid receptor (TC 1.A.9.5) subfamily. GABRB2 sub-subfamily. In terms of assembly, heteropentamer, formed by a combination of alpha (GABRA1-6), beta (GABRB1-3), gamma (GABRG1-3), delta (GABRD), epsilon (GABRE), rho (GABRR1-3), pi (GABRP) and theta (GABRQ) chains, each subunit exhibiting distinct physiological and pharmacological properties. Interacts with UBQLN1. May interact with KIF21B. Identified in a complex of 720 kDa composed of LHFPL4, NLGN2, GABRA1, GABRB2, GABRG2 and GABRB3. In terms of processing, glycosylated.

The protein resides in the postsynaptic cell membrane. Its subcellular location is the cell membrane. The protein localises to the cytoplasmic vesicle. The enzyme catalyses chloride(in) = chloride(out). With respect to regulation, allosterically activated by benzodiazepines and the anesthetic etomidate. Inhibited by the antagonist bicuculline. Potentiated by histamine. Beta subunit of the heteropentameric ligand-gated chloride channel gated by gamma-aminobutyric acid (GABA), a major inhibitory neurotransmitter in the brain. GABA-gated chloride channels, also named GABA(A) receptors (GABAAR), consist of five subunits arranged around a central pore and contain GABA active binding site(s) located at the alpha and beta subunit interface(s). When activated by GABA, GABAARs selectively allow the flow of chloride anions across the cell membrane down their electrochemical gradient. Chloride influx into the postsynaptic neuron following GABAAR opening decreases the neuron ability to generate a new action potential, thereby reducing nerve transmission. GABAARs containing alpha-1 and beta-2 or -3 subunits exhibit synaptogenic activity; the gamma-2 subunit being necessary but not sufficient to induce rapid synaptic contacts formation. Extrasynaptic beta-2 receptors contribute to the tonic GABAergic inhibition. Beta-containing GABAARs can simultaneously bind GABA and histamine where histamine binds at the interface of two neighboring beta subunits, which may be involved in the regulation of sleep and wakefulness. The sequence is that of Gamma-aminobutyric acid receptor subunit beta-2 from Mus musculus (Mouse).